Reading from the N-terminus, the 217-residue chain is Neuron-specific vesicular protein calcyon (217 aa).

The interval Met-1 to Asp-25 is disordered. Over Met-1 to Arg-87 the chain is Extracellular. Residue Asn-73 is glycosylated (N-linked (GlcNAc...) asparagine). A helical membrane pass occupies residues Met-88–Tyr-108. The Cytoplasmic segment spans residues Asp-109–Gln-217. A disordered region spans residues Pro-162 to Gln-217.

The protein belongs to the NSG family. Interacts with CLTA. Glycosylated. Expressed in the pyramidal cells of the prefrontal cortex, in hypothalamus and in caudate nucleus. No expression in spleen. Up-regulated in the prefrontal cortex of schizophrenic patients with nearly twice the levels of non-schizophrenics.

The protein localises to the cytoplasmic vesicle membrane. It is found in the cell membrane. In terms of biological role, interacts with clathrin light chain A and stimulates clathrin self-assembly and clathrin-mediated endocytosis. In Homo sapiens (Human), this protein is Neuron-specific vesicular protein calcyon (CALY).